The primary structure comprises 148 residues: uncharacterized protein (148 aa).

Residues 1–20 (MNLTKLLPAFAAAVVLSACA) form the signal peptide.

This is an uncharacterized protein from Haemophilus influenzae (strain ATCC 51907 / DSM 11121 / KW20 / Rd).